Consider the following 88-residue polypeptide: Putative membrane protein insertion efficiency factor (88 aa).

The disordered stretch occupies residues 65-88 (LDFVPPKKDKNDDSGHTCKAHHHH). Residues 69-80 (PPKKDKNDDSGH) show a composition bias toward basic and acidic residues.

Belongs to the UPF0161 family.

It is found in the cell membrane. Could be involved in insertion of integral membrane proteins into the membrane. This Listeria innocua serovar 6a (strain ATCC BAA-680 / CLIP 11262) protein is Putative membrane protein insertion efficiency factor.